A 317-amino-acid chain; its full sequence is Aspartate carbamoyltransferase catalytic subunit (317 aa).

Arginine 66 and threonine 67 together coordinate carbamoyl phosphate. Residue lysine 94 coordinates L-aspartate. Carbamoyl phosphate-binding residues include arginine 116, histidine 144, and glutamine 147. 2 residues coordinate L-aspartate: arginine 177 and arginine 231. The carbamoyl phosphate site is built by glycine 272 and proline 273.

Belongs to the aspartate/ornithine carbamoyltransferase superfamily. ATCase family. In terms of assembly, heterododecamer (2C3:3R2) of six catalytic PyrB chains organized as two trimers (C3), and six regulatory PyrI chains organized as three dimers (R2).

The catalysed reaction is carbamoyl phosphate + L-aspartate = N-carbamoyl-L-aspartate + phosphate + H(+). The protein operates within pyrimidine metabolism; UMP biosynthesis via de novo pathway; (S)-dihydroorotate from bicarbonate: step 2/3. Functionally, catalyzes the condensation of carbamoyl phosphate and aspartate to form carbamoyl aspartate and inorganic phosphate, the committed step in the de novo pyrimidine nucleotide biosynthesis pathway. The chain is Aspartate carbamoyltransferase catalytic subunit from Rhodopseudomonas palustris (strain BisB18).